A 291-amino-acid chain; its full sequence is Ribosomal RNA small subunit methyltransferase A (291 aa).

Residues His-21, Leu-23, Gly-48, Glu-70, Asp-95, and Asn-115 each coordinate S-adenosyl-L-methionine.

This sequence belongs to the class I-like SAM-binding methyltransferase superfamily. rRNA adenine N(6)-methyltransferase family. RsmA subfamily.

It is found in the cytoplasm. The catalysed reaction is adenosine(1518)/adenosine(1519) in 16S rRNA + 4 S-adenosyl-L-methionine = N(6)-dimethyladenosine(1518)/N(6)-dimethyladenosine(1519) in 16S rRNA + 4 S-adenosyl-L-homocysteine + 4 H(+). Its function is as follows. Specifically dimethylates two adjacent adenosines (A1518 and A1519) in the loop of a conserved hairpin near the 3'-end of 16S rRNA in the 30S particle. May play a critical role in biogenesis of 30S subunits. This chain is Ribosomal RNA small subunit methyltransferase A, found in Prochlorococcus marinus (strain NATL2A).